A 335-amino-acid polypeptide reads, in one-letter code: Phosphate acyltransferase (335 aa).

It belongs to the PlsX family. In terms of assembly, homodimer. Probably interacts with PlsY.

The protein localises to the cytoplasm. The enzyme catalyses a fatty acyl-[ACP] + phosphate = an acyl phosphate + holo-[ACP]. It participates in lipid metabolism; phospholipid metabolism. Functionally, catalyzes the reversible formation of acyl-phosphate (acyl-PO(4)) from acyl-[acyl-carrier-protein] (acyl-ACP). This enzyme utilizes acyl-ACP as fatty acyl donor, but not acyl-CoA. The sequence is that of Phosphate acyltransferase from Leptospira interrogans serogroup Icterohaemorrhagiae serovar copenhageni (strain Fiocruz L1-130).